The following is a 166-amino-acid chain: MANNEQKGGDLQEKLVQVNRVAKVVKGGRIFGFTALTVVGDGSGRVGFGRGKAREVPVAIQKAMDQARRNMVKVSLSGATLQYPVKARHGASKVFMQPASEGTGIIAGGAMRSVLELAGVHDVLAKCYGSTNPVNVVRATIKGLASMQSPEDIAAKRGMSVEEIAG.

The region spanning 11 to 74 (LQEKLVQVNR…DQARRNMVKV (64 aa)) is the S5 DRBM domain.

The protein belongs to the universal ribosomal protein uS5 family. In terms of assembly, part of the 30S ribosomal subunit. Contacts proteins S4 and S8.

In terms of biological role, with S4 and S12 plays an important role in translational accuracy. Functionally, located at the back of the 30S subunit body where it stabilizes the conformation of the head with respect to the body. This Chromohalobacter salexigens (strain ATCC BAA-138 / DSM 3043 / CIP 106854 / NCIMB 13768 / 1H11) protein is Small ribosomal subunit protein uS5.